We begin with the raw amino-acid sequence, 298 residues long: Aquaporin NIP2-1 (298 aa).

N-linked (GlcNAc...) asparagine glycans are attached at residues Asn4, Asn13, and Asn26. A run of 2 helical transmembrane segments spans residues 51-71 (VVSE…AAGI) and 85-105 (SIAG…ISGA). The NPA 1 motif lies at 108–110 (NPA). Helical transmembrane passes span 124-144 (IQVP…SFVL), 166-186 (SLVV…AVAT), and 194-214 (LAGL…GAIS). An NPA 2 motif is present at residues 219 to 221 (NPA). The chain crosses the membrane as a helical span at residues 237-257 (WIYFLGPVMGTLSGAWTYTFI).

The protein belongs to the MIP/aquaporin (TC 1.A.8) family. NIP (TC 1.A.8.12) subfamily. As to expression, mainly expressed in the roots. In roots, it localizes in the main and lateral roots, but not in root hairs. Within a root, it localizes on the plasma membrane of the distal side of both exodermis and endodermis, where casparian strips exist (at protein level). Expressed low levels in leaves and anthers.

It is found in the cell membrane. Functionally, silicon influx transporter responsible for silicon transport from the external solution to the root cells. Is coupled with the silicon efflux transporter LSI2 in both exodermal and endodermal root cells for an efficient silicon transport across the cells into the stele. Silicon is beneficial to plant growth and helps plants to overcome abiotic and biotic stresses by preventing lodging (falling over) and increasing resistance to pests and diseases, as well as other stresses. Is coupled with LSI2 transporter in roots for efficient uptake of arsenite, which is further dispatched in shoots and grains. Mediates uptake of methylated arsenic species in roots. This Oryza sativa subsp. japonica (Rice) protein is Aquaporin NIP2-1.